The primary structure comprises 1730 residues: Nebulin-related-anchoring protein (1730 aa).

An LIM zinc-binding domain is found at 4–64 (QPCSRCGYGV…HAHNPKNNTF (61 aa)). 44 Nebulin repeats span residues 63 to 97 (TFTS…QCKS), 156 to 166 (EYTEDYEQPRG), 175 to 202 (TPAY…ERIS), 203 to 237 (RFST…QQRG), 246 to 273 (TPAY…KEMR), 298 to 307 (YPEEYEEHRG), 316 to 343 (TPAY…KMKG), 348 to 382 (HSLP…SSRG), 389 to 417 (ETPQ…NHMR), 419 to 453 (RYEG…HDIV), 487 to 521 (KYSS…KNKL), 522 to 556 (NYTL…KTKG), 558 to 592 (GFEM…KTKG), 602 to 626 (LLHS…ESKT), 627 to 661 (RFHL…EYTV), 662 to 692 (LPED…WMKG), 702 to 724 (NLEQ…RVDE), 726 to 760 (KFTS…QSVH), 761 to 795 (QYTI…NQKA), 797 to 831 (GFEL…RSRG), 844 to 869 (QMSH…DTKS), 870 to 896 (QCHV…VGYK), 901 to 935 (HFTA…WMKG), 945 to 963 (NVEQ…KYRQ), 969 to 1003 (KFTS…NIKH), 1004 to 1038 (HYTP…KLRD), 1040 to 1074 (GYKL…KMKG), 1078 to 1112 (GSRS…HSKA), 1113 to 1139 (QFHL…QDYK), 1144 to 1178 (QYTS…FMRG), 1183 to 1206 (IPGT…KYRQ), 1212 to 1246 (KYTA…DARH), 1247 to 1281 (EYTM…NLRA), 1283 to 1317 (GYKL…KERG), 1321 to 1355 (GPQS…SSQA), 1356 to 1390 (QFHL…KFTA), 1391 to 1421 (LPED…GMKG), 1429 to 1449 (SPQM…KYRK), 1455 to 1481 (KFTT…RMYR), 1490 to 1524 (RYTL…QTRA), 1526 to 1560 (SYDF…RDRG), 1564 to 1598 (GYRS…KSRS), 1599 to 1626 (QFHS…HYRQ), and 1640 to 1664 (LRHA…LTRG). Ser1081 is modified (phosphoserine). Positions 1595–1620 (KSRSQFHSSTDQPGLLQAKRSQQLAS) are disordered. The span at 1596–1606 (SRSQFHSSTDQ) shows a compositional bias: polar residues.

In terms of assembly, interacts with actin, alpha-actinin, KLHL41, TLN1 and VCL. Interacts with CSRP3. Expressed in cardiac and skeletal muscle.

May be involved in anchoring the terminal actin filaments in the myofibril to the membrane and in transmitting tension from the myofibrils to the extracellular matrix. This is Nebulin-related-anchoring protein from Homo sapiens (Human).